The sequence spans 628 residues: Chaperone protein HtpG (628 aa).

An a; substrate-binding region spans residues 1 to 340 (MKGQETRGFQ…SNDLPLNVSR (340 aa)). The b stretch occupies residues 341 to 556 (EILQDSRVTQ…ADDMTTQMAK (216 aa)). The tract at residues 557–628 (LFAAAGQAAP…IRRMNQLLNA (72 aa)) is c.

The protein belongs to the heat shock protein 90 family. Homodimer.

Its subcellular location is the cytoplasm. Its function is as follows. Molecular chaperone. Has ATPase activity. In Sodalis glossinidius (strain morsitans), this protein is Chaperone protein HtpG.